Here is a 336-residue protein sequence, read N- to C-terminus: Isethionate-binding periplasmic protein DctP (336 aa).

The first 23 residues, 1 to 23 (MKHLLKAGALVALACIVTLTAGA), serve as a signal peptide directing secretion.

It belongs to the bacterial solute-binding protein 7 family. The complex comprises the periplasmic solute receptor protein DctP, and the fused transmembrane protein DctMQ.

The protein localises to the periplasm. It catalyses the reaction 2-hydroxyethane-1-sulfonate(out) + Na(+)(out) = 2-hydroxyethane-1-sulfonate(in) + Na(+)(in). It participates in organosulfur degradation; alkanesulfonate degradation. Part of the tripartite ATP-independent periplasmic (TRAP) transport system DctPQM involved in the uptake of isethionate (2-hydroxyethanesulfonate), which is then catabolized by enzymes encoded by adjacent genes in the locus. The DctP subunit is the solute-binding protein. Thereby is involved in an anaerobic respiration pathway that converts the sulfonate isethionate to ammonia, acetate and sulfide. The protein is Isethionate-binding periplasmic protein DctP of Oleidesulfovibrio alaskensis (strain ATCC BAA-1058 / DSM 17464 / G20) (Desulfovibrio alaskensis).